We begin with the raw amino-acid sequence, 535 residues long: MSITSEELNYLIWRYCQEMGHEVSALALQDETRVLEFDEKYKEHIPLGTLVNLVQRGILYTESELMVDSKGDISALNEHHLSEDFNLVQALQIDKEKFPEISSEGRFTLETNSESNKAGEDGASTVERETQEDDTNSIDSSDDLDGFVKILKEIVKLDNIVSSTWNPLDESILAYGEKNSVARLARIVETDQEGKKYWKLTIIAELRHPFALSASSGKTTNQVTCLAWSHDGNSIVTGVENGELRLWNKTGALLNVLNFHRAPIVSVKWNKDGTHIISMDVENVTILWNVISGTVMQHFELKETGGSSINAENHSGDGSLGVDVEWVDDDKFVIPGPKGAIFVYQITEKTPTGKLIGHHGPISVLEFNDTNKLLLSASDDGTLRIWHGGNGNSQNCFYGHSQSIVSASWVGDDKVISCSMDGSVRLWSLKQNTLLALSIVDGVPIFAGRISQDGQKYAVAFMDGQVNVYDLKKLNSKSRSLYGNRDGILNPLPIPLYASYQSSQDNDYIFDLSWNCAGNKISVAYSLQEGSVVAI.

One can recognise a LisH domain in the interval Thr-4 to Glu-36. The tract at residues Glu-104–Ser-140 is disordered. Positions Thr-130–Ser-140 are enriched in acidic residues. At Ser-137 the chain carries Phosphoserine. WD repeat units lie at residues Val-155 to Arg-186, Lys-218 to Asn-248, Phe-259 to Asn-289, Gly-316 to Gln-345, Gly-357 to His-387, Gly-399 to Ser-428, Val-440 to Asp-470, and Ser-503 to Ala-534.

As to quaternary structure, homotetramer. Interacts with SIR4 N-terminal domain. Interacts with a complex composed of SIN3 and RPD3. Identified in the Set3C complex with HOS2, HST1, SNT1, CPR1, HOS4/YIL112W and SET3.

The protein resides in the nucleus. Its function is as follows. Antagonizes telomeric silencing in yeast. May recruit SIR4 to non-telomeric sites or repression. The chain is SIR4-interacting protein SIF2 (SIF2) from Saccharomyces cerevisiae (strain ATCC 204508 / S288c) (Baker's yeast).